Here is a 129-residue protein sequence, read N- to C-terminus: Replication initiation control protein YabA (129 aa).

Residues 52–71 (LSLTDEATPEPKAETEAEHG) form a disordered region. Residues 60–71 (PEPKAETEAEHG) are compositionally biased toward basic and acidic residues. Zn(2+) is bound by residues H103, C105, C119, and C122.

This sequence belongs to the YabA family. As to quaternary structure, homotetramer. Interacts with both DnaA and DnaN, acting as a bridge between these two proteins. Zn(2+) serves as cofactor.

It localises to the cytoplasm. It is found in the nucleoid. Involved in control of chromosome replication initiation. Inhibits the cooperative binding of DnaA to the oriC region, thus negatively regulating initiation of chromosome replication. Inhibits the ability of DnaA-ATP to form a helix on DNA; does not disassemble preformed DnaA-DNA helices. Decreases the residence time of DnaA on the chromosome at its binding sites (oriC, replication forks and promoter-binding sites). Tethers DnaA to the replication machinery via the DNA polymerase beta sliding clamp subunit (dnaN). Associates with oriC and other DnaA targets on the chromosome in a DnaA-dependent manner. This is Replication initiation control protein YabA from Listeria monocytogenes serotype 4a (strain HCC23).